A 138-amino-acid chain; its full sequence is Ribonuclease kappa-A (138 aa).

Positions 1–24 (MVLYFSPVLTFFLANFFNSKSTTT) are cleaved as a signal peptide. Over 25–75 (ENLQVFLVENQHRDSKRKINPTFSKKGIEVRQQNENLWSKIVALRFDYSVW) the chain is Extracellular. Residues 76–96 (GIIQLVLMMGLFFYINSVALI) form a helical membrane-spanning segment. The Cytoplasmic segment spans residues 97–138 (EDLPIDEEFNSVEEFYTAATSAYNQNAYTVGLPVHLCAYASI).

Belongs to the RNase K family.

It localises to the membrane. Endoribonuclease. This chain is Ribonuclease kappa-A, found in Ceratitis capitata (Mediterranean fruit fly).